A 393-amino-acid chain; its full sequence is Putative N(4)-(beta-N-acetylglucosaminyl)-L-asparaginase CG1827 (393 aa).

An N-terminal signal peptide occupies residues 1-23; that stretch reads MRRHLRASLWILCLATMAFSILA. N-linked (GlcNAc...) asparagine glycosylation is found at N49 and N64. Cystine bridges form between C97/C102 and C196/C212. T243 acts as the Nucleophile in catalysis. Residues 271 to 274 and 294 to 297 contribute to the substrate site; these read RVGD and TGDG. An intrachain disulfide couples C354 to C381.

The protein belongs to the Ntn-hydrolase family. Heterotetramer of two alpha and two beta chains arranged as a dimer of alpha/beta heterodimers. In terms of processing, cleaved into an alpha and beta chain by autocatalysis; this activates the enzyme. The N-terminal residue of the beta subunit is responsible for the nucleophile hydrolase activity.

It catalyses the reaction N(4)-(beta-N-acetyl-D-glucosaminyl)-L-asparagine + H2O = N-acetyl-beta-D-glucosaminylamine + L-aspartate + H(+). Cleaves the GlcNAc-Asn bond which joins oligosaccharides to the peptide of asparagine-linked glycoproteins. This Drosophila melanogaster (Fruit fly) protein is Putative N(4)-(beta-N-acetylglucosaminyl)-L-asparaginase CG1827.